Here is a 578-residue protein sequence, read N- to C-terminus: Proline--tRNA ligase (578 aa).

This sequence belongs to the class-II aminoacyl-tRNA synthetase family. ProS type 1 subfamily. As to quaternary structure, homodimer.

Its subcellular location is the cytoplasm. It catalyses the reaction tRNA(Pro) + L-proline + ATP = L-prolyl-tRNA(Pro) + AMP + diphosphate. Its function is as follows. Catalyzes the attachment of proline to tRNA(Pro) in a two-step reaction: proline is first activated by ATP to form Pro-AMP and then transferred to the acceptor end of tRNA(Pro). As ProRS can inadvertently accommodate and process non-cognate amino acids such as alanine and cysteine, to avoid such errors it has two additional distinct editing activities against alanine. One activity is designated as 'pretransfer' editing and involves the tRNA(Pro)-independent hydrolysis of activated Ala-AMP. The other activity is designated 'posttransfer' editing and involves deacylation of mischarged Ala-tRNA(Pro). The misacylated Cys-tRNA(Pro) is not edited by ProRS. This chain is Proline--tRNA ligase, found in Syntrophus aciditrophicus (strain SB).